The primary structure comprises 90 residues: Small ribosomal subunit protein uS15c (90 aa).

This sequence belongs to the universal ribosomal protein uS15 family. In terms of assembly, part of the 30S ribosomal subunit.

It is found in the plastid. The protein localises to the chloroplast. The chain is Small ribosomal subunit protein uS15c (rps15-A) from Lolium perenne (Perennial ryegrass).